We begin with the raw amino-acid sequence, 81 residues long: MSHFVKIYDTCIGCTQCVRACPTDVLEMIPWDRCKAKQIASAPRTEDCVGCKRCESACPTDFLSVRVYLGRETTRSMGLAY.

4Fe-4S ferredoxin-type domains follow at residues 2–31 (SHFV…MIPW) and 39–68 (IASA…VRVY). [4Fe-4S] cluster is bound by residues Cys-11, Cys-14, Cys-17, Cys-21, Cys-48, Cys-51, Cys-54, and Cys-58.

In terms of assembly, the eukaryotic PSI reaction center is composed of at least 11 subunits. [4Fe-4S] cluster serves as cofactor.

It is found in the plastid thylakoid membrane. The catalysed reaction is reduced [plastocyanin] + hnu + oxidized [2Fe-2S]-[ferredoxin] = oxidized [plastocyanin] + reduced [2Fe-2S]-[ferredoxin]. Apoprotein for the two 4Fe-4S centers FA and FB of photosystem I (PSI); essential for photochemical activity. FB is the terminal electron acceptor of PSI, donating electrons to ferredoxin. The C-terminus interacts with PsaA/B/D and helps assemble the protein into the PSI complex. Required for binding of PsaD and PsaE to PSI. PSI is a plastocyanin-ferredoxin oxidoreductase, converting photonic excitation into a charge separation, which transfers an electron from the donor P700 chlorophyll pair to the spectroscopically characterized acceptors A0, A1, FX, FA and FB in turn. The polypeptide is Photosystem I iron-sulfur center (Cuscuta exaltata (Tall dodder)).